Here is a 98-residue protein sequence, read N- to C-terminus: NADH-quinone oxidoreductase subunit K (98 aa).

3 consecutive transmembrane segments (helical) span residues 1–21 (MGHLLGLGAVLFCISLAGIFL), 27–47 (IVLLMSIELMLLSVNVNFIAF), and 59–79 (FVFFILTVAAAEAAIGLAILV).

The protein belongs to the complex I subunit 4L family. As to quaternary structure, NDH-1 is composed of 14 different subunits. Subunits NuoA, H, J, K, L, M, N constitute the membrane sector of the complex.

It localises to the cell inner membrane. It catalyses the reaction a quinone + NADH + 5 H(+)(in) = a quinol + NAD(+) + 4 H(+)(out). Its function is as follows. NDH-1 shuttles electrons from NADH, via FMN and iron-sulfur (Fe-S) centers, to quinones in the respiratory chain. The immediate electron acceptor for the enzyme in this species is believed to be ubiquinone. Couples the redox reaction to proton translocation (for every two electrons transferred, four hydrogen ions are translocated across the cytoplasmic membrane), and thus conserves the redox energy in a proton gradient. The chain is NADH-quinone oxidoreductase subunit K from Xanthomonas oryzae pv. oryzae (strain PXO99A).